Consider the following 297-residue polypeptide: Mitochondrial thiamine pyrophosphate carrier 1 (297 aa).

Solcar repeat units follow at residues 13–94, 102–195, and 196–295; these read SHVF…TNAA, PPTI…IRAR, and WPET…LMRV. Helical transmembrane passes span 19–36, 75–91, 109–128, 163–187, 203–219, and 270–287; these read LVSG…IAPL, IMYI…YSYT, LAGA…FDVL, GLGG…AMFG, TAGA…TFPL, and GIGL…INLW.

The protein belongs to the mitochondrial carrier (TC 2.A.29) family.

It is found in the mitochondrion inner membrane. Mitochondrial transporter that mediates uptake of thiamine pyrophosphate (ThPP) into mitochondria. This Vanderwaltozyma polyspora (strain ATCC 22028 / DSM 70294 / BCRC 21397 / CBS 2163 / NBRC 10782 / NRRL Y-8283 / UCD 57-17) (Kluyveromyces polysporus) protein is Mitochondrial thiamine pyrophosphate carrier 1 (TPC1).